The primary structure comprises 307 residues: Homoserine kinase (307 aa).

95–105 (PQSRGLGSSAS) contacts ATP.

This sequence belongs to the GHMP kinase family. Homoserine kinase subfamily.

Its subcellular location is the cytoplasm. The catalysed reaction is L-homoserine + ATP = O-phospho-L-homoserine + ADP + H(+). Its pathway is amino-acid biosynthesis; L-threonine biosynthesis; L-threonine from L-aspartate: step 4/5. Catalyzes the ATP-dependent phosphorylation of L-homoserine to L-homoserine phosphate. In Corynebacterium aurimucosum (strain ATCC 700975 / DSM 44827 / CIP 107346 / CN-1) (Corynebacterium nigricans), this protein is Homoserine kinase.